Reading from the N-terminus, the 871-residue chain is Leucine--tRNA ligase (871 aa).

The short motif at 42–52 (PYPSGSLHMGH) is the 'HIGH' region element. A 'KMSKS' region motif is present at residues 634–638 (TMSKS). Residue K637 participates in ATP binding.

It belongs to the class-I aminoacyl-tRNA synthetase family.

It localises to the cytoplasm. It carries out the reaction tRNA(Leu) + L-leucine + ATP = L-leucyl-tRNA(Leu) + AMP + diphosphate. This is Leucine--tRNA ligase from Nostoc punctiforme (strain ATCC 29133 / PCC 73102).